The sequence spans 257 residues: MKAHKIFWLNLAAIIIISIVVSGDMFLAMKWEQIHLKDGLKKVLSTYPIKNLETLYEIDGHDNPHYENNDQDTWYIESSYSVVGSDELLKEDRMLLKVDKNTHKITGEYDTTTNDRKNATDSTYKSYPVKVVNNKIVFTKDVKDPALKQKIENNQFLIQSGDLTSILNSNDLKVTHDPTTDYYNLSGKLSNDNPNVKQLKRRYNIPKNASTKVELKGMSDLKGNNHQDQKLYFYFSSPGKDQIIYKESLTYNKISEH.

The helical transmembrane segment at 6-26 threads the bilayer; sequence IFWLNLAAIIIISIVVSGDMF.

The protein belongs to the staphylococcal tandem lipoprotein family.

The protein localises to the cell membrane. This is an uncharacterized protein from Staphylococcus aureus (strain NCTC 8325 / PS 47).